A 250-amino-acid chain; its full sequence is Pyrroloquinoline-quinone synthase (250 aa).

It belongs to the PqqC family.

The catalysed reaction is 6-(2-amino-2-carboxyethyl)-7,8-dioxo-1,2,3,4,7,8-hexahydroquinoline-2,4-dicarboxylate + 3 O2 = pyrroloquinoline quinone + 2 H2O2 + 2 H2O + H(+). It participates in cofactor biosynthesis; pyrroloquinoline quinone biosynthesis. Functionally, ring cyclization and eight-electron oxidation of 3a-(2-amino-2-carboxyethyl)-4,5-dioxo-4,5,6,7,8,9-hexahydroquinoline-7,9-dicarboxylic-acid to PQQ. This chain is Pyrroloquinoline-quinone synthase, found in Xanthomonas oryzae pv. oryzae (strain MAFF 311018).